Here is a 310-residue protein sequence, read N- to C-terminus: Thioredoxin reductase (310 aa).

34 to 41 (NGMQPGGQ) is a binding site for FAD. C135 and C138 are oxidised to a cystine. 281–290 (DVQDKIYRQA) contributes to the FAD binding site.

Belongs to the class-II pyridine nucleotide-disulfide oxidoreductase family. Homodimer. FAD serves as cofactor.

The protein resides in the cytoplasm. The enzyme catalyses [thioredoxin]-dithiol + NADP(+) = [thioredoxin]-disulfide + NADPH + H(+). In Rickettsia prowazekii (strain Madrid E), this protein is Thioredoxin reductase (trxB).